Here is a 188-residue protein sequence, read N- to C-terminus: UPF0301 protein XC_1365 (188 aa).

The protein belongs to the UPF0301 (AlgH) family.

The chain is UPF0301 protein XC_1365 from Xanthomonas campestris pv. campestris (strain 8004).